Here is a 398-residue protein sequence, read N- to C-terminus: Lysophospholipid transporter LplT (398 aa).

11 helical membrane passes run valine 19–alanine 39, isoleucine 53–alanine 73, leucine 91–isoleucine 111, leucine 139–alanine 159, isoleucine 164–isoleucine 184, leucine 227–leucine 247, tyrosine 257–valine 277, threonine 281–leucine 301, alanine 304–valine 324, glycine 350–isoleucine 370, and valine 372–isoleucine 392.

Belongs to the major facilitator superfamily. LplT (TC 2.A.1.42) family.

Its subcellular location is the cell inner membrane. Catalyzes the facilitated diffusion of 2-acyl-glycero-3-phosphoethanolamine (2-acyl-GPE) into the cell. This Citrobacter koseri (strain ATCC BAA-895 / CDC 4225-83 / SGSC4696) protein is Lysophospholipid transporter LplT.